Consider the following 273-residue polypeptide: Large ribosomal subunit protein uL2 (273 aa).

2 disordered regions span residues 28 to 53 and 221 to 273; these read KPFA…TTRH and RGTA…RRSK. Over residues 39 to 48 the composition is skewed to low complexity; the sequence is KSGGRNNNGR.

This sequence belongs to the universal ribosomal protein uL2 family. In terms of assembly, part of the 50S ribosomal subunit. Forms a bridge to the 30S subunit in the 70S ribosome.

Its function is as follows. One of the primary rRNA binding proteins. Required for association of the 30S and 50S subunits to form the 70S ribosome, for tRNA binding and peptide bond formation. It has been suggested to have peptidyltransferase activity; this is somewhat controversial. Makes several contacts with the 16S rRNA in the 70S ribosome. The polypeptide is Large ribosomal subunit protein uL2 (Enterobacter sp. (strain 638)).